The primary structure comprises 235 residues: Octanoyltransferase (235 aa).

The 178-residue stretch at 52-229 (KNRQASMIFC…SICSALEYIN (178 aa)) folds into the BPL/LPL catalytic domain. Substrate contacts are provided by residues 89 to 96 (RGGKITWH), 159 to 161 (AIG), and 172 to 174 (GFA). Residue Cys-190 is the Acyl-thioester intermediate of the active site.

It belongs to the LipB family.

Its subcellular location is the cytoplasm. It catalyses the reaction octanoyl-[ACP] + L-lysyl-[protein] = N(6)-octanoyl-L-lysyl-[protein] + holo-[ACP] + H(+). Its pathway is protein modification; protein lipoylation via endogenous pathway; protein N(6)-(lipoyl)lysine from octanoyl-[acyl-carrier-protein]: step 1/2. In terms of biological role, catalyzes the transfer of endogenously produced octanoic acid from octanoyl-acyl-carrier-protein onto the lipoyl domains of lipoate-dependent enzymes. Lipoyl-ACP can also act as a substrate although octanoyl-ACP is likely to be the physiological substrate. The chain is Octanoyltransferase from Tropheryma whipplei (strain Twist) (Whipple's bacillus).